Consider the following 878-residue polypeptide: Vacuolar membrane protease (878 aa).

Residues 1–16 are Cytoplasmic-facing; it reads MASLRLPRANPLAFTR. The helical transmembrane segment at 17 to 37 threads the bilayer; the sequence is WPVTVITAIVYLALLIPLLVV. Residues 38 to 390 are Vacuolar-facing; it reads HHVVPSAPSS…STFVLFQLHT (353 aa). 2 N-linked (GlcNAc...) asparagine glycosylation sites follow: Asn-53 and Asn-119. Zn(2+) contacts are provided by His-174 and Asp-186. The active-site Proton acceptor is Glu-220. Zn(2+) is bound by residues Glu-221, Glu-246, and His-319. The chain crosses the membrane as a helical span at residues 391–411; the sequence is LFALLVTLLIVGPLTLLFTSI. The Cytoplasmic segment spans residues 412–442; the sequence is ALTKADKMYLFRSSAKSEDRLDVVPLQGLRG. A helical membrane pass occupies residues 443–463; it reads FFRFPFLFGIPTVVTVGLAYL. Residues 464 to 473 are Vacuolar-facing; that stretch reads VTKVNPYIIH. The chain crosses the membrane as a helical span at residues 474–494; the sequence is SSAYAVWSMMVAAWVFLAWFV. Residues 495-508 are Cytoplasmic-facing; sequence SRVADFARPSAFHR. The helical transmembrane segment at 509–529 threads the bilayer; the sequence is IYTLTWMYVLSWVSAVIATVY. Over 530-533 the chain is Vacuolar; the sequence is ANQR. A helical membrane pass occupies residues 534-554; that stretch reads GLAGGYFIFFFHAGIFLATWI. The Cytoplasmic segment spans residues 555 to 659; that stretch reads SYLELFALPS…ALPKWTWGLQ (105 aa). The segment covering 577–590 has biased composition (low complexity); the sequence is GRASGHGSRRGTTS. Positions 577-611 are disordered; it reads GRASGHGSRRGTTSGEDDGEEAEEEPTESTSLLGS. Residues 591 to 603 are compositionally biased toward acidic residues; sequence GEDDGEEAEEEPT. Residues 660–680 form a helical membrane-spanning segment; that stretch reads LLLTAPITLIMVGPLALLTIS. The Vacuolar portion of the chain corresponds to 681-693; it reads AISQTGQDGGHPL. A helical membrane pass occupies residues 694 to 714; it reads FAYVAIAIFTTIMLTPLLPFI. The Cytoplasmic segment spans residues 715–721; sequence HRYTYHV. A helical membrane pass occupies residues 722–742; the sequence is PLFLLAVFLGTLIYNLVAFPF. Over 743-878 the chain is Vacuolar; the sequence is SDSNRLKLYY…RRAFEIGNDD (136 aa).

Belongs to the peptidase M28 family. The cofactor is Zn(2+).

The protein resides in the vacuole membrane. In terms of biological role, may be involved in vacuolar sorting and osmoregulation. This chain is Vacuolar membrane protease, found in Aspergillus flavus (strain ATCC 200026 / FGSC A1120 / IAM 13836 / NRRL 3357 / JCM 12722 / SRRC 167).